The chain runs to 388 residues: Venom acid phosphatase Acph-1 (388 aa).

Positions 1–15 (MSVIAILAMVVGVQA) are cleaved as a signal peptide. His-26 functions as the Nucleophile in the catalytic mechanism. 2 cysteine pairs are disulfide-bonded: Cys-145-Cys-355 and Cys-330-Cys-334. N-linked (GlcNAc...) asparagine glycosylation is found at Asn-182 and Asn-228. Glu-273 (proton donor) is an active-site residue. The N-linked (GlcNAc...) asparagine glycan is linked to Asn-366.

This sequence belongs to the histidine acid phosphatase family. Expressed by the venom gland.

The protein localises to the secreted. The catalysed reaction is a phosphate monoester + H2O = an alcohol + phosphate. The protein is Venom acid phosphatase Acph-1 of Apis mellifera (Honeybee).